Consider the following 94-residue polypeptide: Integration host factor subunit beta (94 aa).

Belongs to the bacterial histone-like protein family. As to quaternary structure, heterodimer of an alpha and a beta chain.

Functionally, this protein is one of the two subunits of integration host factor, a specific DNA-binding protein that functions in genetic recombination as well as in transcriptional and translational control. The protein is Integration host factor subunit beta of Aeromonas hydrophila subsp. hydrophila (strain ATCC 7966 / DSM 30187 / BCRC 13018 / CCUG 14551 / JCM 1027 / KCTC 2358 / NCIMB 9240 / NCTC 8049).